A 482-amino-acid polypeptide reads, in one-letter code: Cysteine--tRNA ligase (482 aa).

Residue cysteine 29 coordinates Zn(2+). The 'HIGH' region motif lies at proline 31–asparagine 41. 3 residues coordinate Zn(2+): cysteine 224, histidine 249, and glutamate 253. The 'KMSKS' region signature appears at lysine 282–serine 286. Lysine 285 is a binding site for ATP.

It belongs to the class-I aminoacyl-tRNA synthetase family. Monomer. Requires Zn(2+) as cofactor.

It localises to the cytoplasm. The catalysed reaction is tRNA(Cys) + L-cysteine + ATP = L-cysteinyl-tRNA(Cys) + AMP + diphosphate. The chain is Cysteine--tRNA ligase from Nitrobacter hamburgensis (strain DSM 10229 / NCIMB 13809 / X14).